The chain runs to 445 residues: Phosphoglucosamine mutase (445 aa).

Ser102 (phosphoserine intermediate) is an active-site residue. Mg(2+)-binding residues include Ser102, Asp241, Asp243, and Asp245. A Phosphoserine modification is found at Ser102.

Belongs to the phosphohexose mutase family. Mg(2+) serves as cofactor. In terms of processing, activated by phosphorylation.

It catalyses the reaction alpha-D-glucosamine 1-phosphate = D-glucosamine 6-phosphate. Its function is as follows. Catalyzes the conversion of glucosamine-6-phosphate to glucosamine-1-phosphate. The sequence is that of Phosphoglucosamine mutase from Escherichia fergusonii (strain ATCC 35469 / DSM 13698 / CCUG 18766 / IAM 14443 / JCM 21226 / LMG 7866 / NBRC 102419 / NCTC 12128 / CDC 0568-73).